The chain runs to 234 residues: UPF0104 membrane protein MJ1078 (234 aa).

Transmembrane regions (helical) follow at residues 32–52, 70–90, 123–143, 164–184, and 198–218; these read VGTV…LLFI, IKWG…FLIV, LITL…FIFL, LTAI…LIYI, and VLIL…AIMF.

The protein belongs to the UPF0104 family.

The protein localises to the cell membrane. This is UPF0104 membrane protein MJ1078 from Methanocaldococcus jannaschii (strain ATCC 43067 / DSM 2661 / JAL-1 / JCM 10045 / NBRC 100440) (Methanococcus jannaschii).